Here is a 130-residue protein sequence, read N- to C-terminus: Small ribosomal subunit protein uS11c (130 aa).

The protein belongs to the universal ribosomal protein uS11 family. As to quaternary structure, part of the 30S ribosomal subunit.

The protein resides in the plastid. The protein localises to the chloroplast. The protein is Small ribosomal subunit protein uS11c of Guillardia theta (Cryptophyte).